Reading from the N-terminus, the 124-residue chain is Large ribosomal subunit protein bL20 (124 aa).

The protein belongs to the bacterial ribosomal protein bL20 family.

Its function is as follows. Binds directly to 23S ribosomal RNA and is necessary for the in vitro assembly process of the 50S ribosomal subunit. It is not involved in the protein synthesizing functions of that subunit. In Mycoplasma genitalium (strain ATCC 33530 / DSM 19775 / NCTC 10195 / G37) (Mycoplasmoides genitalium), this protein is Large ribosomal subunit protein bL20 (rplT).